The following is a 357-amino-acid chain: Protein ATP1B4 (357 aa).

The Nuclear segment spans residues 1–110 (MRRQLRSRRA…FLARTGQSWS (110 aa)). Residues 15 to 80 (YSYRYRLDDP…EEGQGQPTGN (66 aa)) form a disordered region. Acidic residues predominate over residues 52–73 (EEEEEEEEKEEEEEEEKEEEEG). Residues 111–131 (LILLIYFFFYASLAAVITLCM) form a helical; Signal-anchor for type II membrane protein membrane-spanning segment. The Perinuclear space segment spans residues 132–357 (YTLFLTISPY…RVIFTLNIET (226 aa)).

Belongs to the X(+)/potassium ATPases subunit beta family. In terms of assembly, associates with a SMAD7-transcriptional complex. Interacts with SNW1 and TOR1AIP1. According to PubMed:17592128, does not associate with known Na,K-ATPase alpha-subunits. Highly expressed in skeletal muscle and at a lower level in heart.

It is found in the nucleus inner membrane. Functionally, may act as a transcriptional coregulator during muscle development through its interaction with SNW1. Has lost its ancestral function as a Na,K-ATPase beta-subunit. This Homo sapiens (Human) protein is Protein ATP1B4 (ATP1B4).